The following is a 207-amino-acid chain: MDPVSVVHSFARSQGLPLNFETVGCEGPSHDPRFVIECKFLDFQHQCTDSSKKRAIQKICVLISNDLKENGLLEEAKTFKPEYKSIAQVYGKFFKRYIAEKESSVITPFKLVNNQILLHDIDELVEYGSSEYMFRHMLLCYIIHKQGIDIKEMCNMKFSPDYIECLSHHLTSTVDIDVHQQDCGNLSVVIFAKDNNIKKQLQIQVSA.

One can recognise a DRBM domain in the interval 2–69 (DPVSVVHSFA…CVLISNDLKE (68 aa)).

The sequence is that of Non-structural protein 5 (Segment-12) from Banna virus (BAV).